The following is a 73-amino-acid chain: uncharacterized protein (73 aa).

Residues 37–57 (AIIITVAVVAFGALTLGAIGA) traverse the membrane as a helical segment.

The protein resides in the membrane. This is an uncharacterized protein from Natronomonas pharaonis (strain ATCC 35678 / DSM 2160 / CIP 103997 / JCM 8858 / NBRC 14720 / NCIMB 2260 / Gabara) (Halobacterium pharaonis).